We begin with the raw amino-acid sequence, 185 residues long: Putative lipoprotein LprB (185 aa).

Residues 1–24 form the signal peptide; the sequence is MRRKVRRLTLAVSALVALFPAVAG. Cys25 carries N-palmitoyl cysteine lipidation. The S-diacylglycerol cysteine moiety is linked to residue Cys25. The interval 26–50 is disordered; that stretch reads SDSGDNKPGATIPSTPANAEGRHGP.

It is found in the cell membrane. This Mycobacterium bovis (strain ATCC BAA-935 / AF2122/97) protein is Putative lipoprotein LprB (lprB).